The chain runs to 211 residues: Histidine biosynthesis bifunctional protein HisIE (211 aa).

The interval 1–107 (MNKLIDFSKG…FNSEIESRFK (107 aa)) is phosphoribosyl-AMP cyclohydrolase. Residues 108–211 (IQALAQTIHQ…KGERKEVREW (104 aa)) form a phosphoribosyl-ATP pyrophosphohydrolase region.

This sequence in the N-terminal section; belongs to the PRA-CH family. In the C-terminal section; belongs to the PRA-PH family.

It localises to the cytoplasm. It catalyses the reaction 1-(5-phospho-beta-D-ribosyl)-ATP + H2O = 1-(5-phospho-beta-D-ribosyl)-5'-AMP + diphosphate + H(+). It carries out the reaction 1-(5-phospho-beta-D-ribosyl)-5'-AMP + H2O = 1-(5-phospho-beta-D-ribosyl)-5-[(5-phospho-beta-D-ribosylamino)methylideneamino]imidazole-4-carboxamide. It participates in amino-acid biosynthesis; L-histidine biosynthesis; L-histidine from 5-phospho-alpha-D-ribose 1-diphosphate: step 2/9. It functions in the pathway amino-acid biosynthesis; L-histidine biosynthesis; L-histidine from 5-phospho-alpha-D-ribose 1-diphosphate: step 3/9. The chain is Histidine biosynthesis bifunctional protein HisIE from Staphylococcus epidermidis (strain ATCC 35984 / DSM 28319 / BCRC 17069 / CCUG 31568 / BM 3577 / RP62A).